Reading from the N-terminus, the 628-residue chain is Chaperone protein HtpG (628 aa).

Residues 1 to 337 (MSEKKYTFET…SADLPLNVSR (337 aa)) form an a; substrate-binding region. A b region spans residues 338–554 (EILQHNKVID…DYGMSLHMQK (217 aa)). The c stretch occupies residues 555–628 (MMEEAGQSFM…FVKLVNKYIR (74 aa)).

It belongs to the heat shock protein 90 family. As to quaternary structure, homodimer.

The protein localises to the cytoplasm. Its function is as follows. Molecular chaperone. Has ATPase activity. This Francisella tularensis subsp. tularensis (strain FSC 198) protein is Chaperone protein HtpG.